Here is a 288-residue protein sequence, read N- to C-terminus: Pyridoxal kinase PdxY (288 aa).

Residues S10 and 45–46 (TQ) contribute to the substrate site. Positions 112, 143, 148, and 181 each coordinate ATP. D222 contacts substrate.

Belongs to the pyridoxine kinase family. PdxY subfamily. Homodimer. Mg(2+) is required as a cofactor.

The enzyme catalyses pyridoxal + ATP = pyridoxal 5'-phosphate + ADP + H(+). The protein operates within cofactor metabolism; pyridoxal 5'-phosphate salvage; pyridoxal 5'-phosphate from pyridoxal: step 1/1. Functionally, pyridoxal kinase involved in the salvage pathway of pyridoxal 5'-phosphate (PLP). Catalyzes the phosphorylation of pyridoxal to PLP. This Paraburkholderia xenovorans (strain LB400) protein is Pyridoxal kinase PdxY.